The sequence spans 371 residues: Cytochrome b (371 aa).

The next 4 membrane-spanning stretches (helical) occupy residues 32 to 52 (VGFSLGFFICMQIICGVCLAW), 76 to 98 (FVIRSTHICFTSLLFFLLYVHIF), 113 to 133 (VWAVGFIIYIFIVVIGFIGYV), and 179 to 199 (LHVLHVLLPFVLILVIFMHLF). Heme b-binding residues include His82 and His96. His183 and His197 together coordinate heme b. His202 serves as a coordination point for a ubiquinone. 4 helical membrane passes run 227–247 (FYLRDMFLAFLILFYVVYFIF), 296–316 (LMVILLFSLFLFILNCILWFV), 329–349 (LILFYSIFMSGFLALYVILAY), and 350–370 (PIWMELQFWVLLLFMLVVCRL).

This sequence belongs to the cytochrome b family. In terms of assembly, the main subunits of complex b-c1 are: cytochrome b, cytochrome c1 and the Rieske protein. It depends on heme b as a cofactor.

The protein localises to the mitochondrion inner membrane. Component of the ubiquinol-cytochrome c reductase complex (complex III or cytochrome b-c1 complex) that is part of the mitochondrial respiratory chain. The b-c1 complex mediates electron transfer from ubiquinol to cytochrome c. Contributes to the generation of a proton gradient across the mitochondrial membrane that is then used for ATP synthesis. The protein is Cytochrome b (MT-CYB) of Leishmania tarentolae (Sauroleishmania tarentolae).